The chain runs to 423 residues: Imidazolonepropionase (423 aa).

The Fe(3+) site is built by His-80 and His-82. Residues His-80 and His-82 each contribute to the Zn(2+) site. Arg-89, Tyr-152, and His-185 together coordinate 4-imidazolone-5-propanoate. N-formimidoyl-L-glutamate is bound at residue Tyr-152. Fe(3+) is bound at residue His-250. His-250 provides a ligand contact to Zn(2+). Residue Gln-253 participates in 4-imidazolone-5-propanoate binding. A Fe(3+)-binding site is contributed by Asp-325. A Zn(2+)-binding site is contributed by Asp-325. Residues Asn-327 and Gly-329 each contribute to the N-formimidoyl-L-glutamate site. Position 330 (Thr-330) interacts with 4-imidazolone-5-propanoate.

This sequence belongs to the metallo-dependent hydrolases superfamily. HutI family. It depends on Zn(2+) as a cofactor. Fe(3+) serves as cofactor.

The protein localises to the cytoplasm. It catalyses the reaction 4-imidazolone-5-propanoate + H2O = N-formimidoyl-L-glutamate. The protein operates within amino-acid degradation; L-histidine degradation into L-glutamate; N-formimidoyl-L-glutamate from L-histidine: step 3/3. Catalyzes the hydrolytic cleavage of the carbon-nitrogen bond in imidazolone-5-propanoate to yield N-formimidoyl-L-glutamate. It is the third step in the universal histidine degradation pathway. The sequence is that of Imidazolonepropionase from Cupriavidus pinatubonensis (strain JMP 134 / LMG 1197) (Cupriavidus necator (strain JMP 134)).